We begin with the raw amino-acid sequence, 243 residues long: Orotidine 5'-phosphate decarboxylase (243 aa).

Residues Asp18, Lys39, 66–75 (DLKFHDIPAT), Thr130, Arg192, Gln201, Gly221, and Arg222 each bind substrate. Lys68 acts as the Proton donor in catalysis.

This sequence belongs to the OMP decarboxylase family. Type 1 subfamily. In terms of assembly, homodimer.

It carries out the reaction orotidine 5'-phosphate + H(+) = UMP + CO2. The protein operates within pyrimidine metabolism; UMP biosynthesis via de novo pathway; UMP from orotate: step 2/2. Its function is as follows. Catalyzes the decarboxylation of orotidine 5'-monophosphate (OMP) to uridine 5'-monophosphate (UMP). In Synechococcus sp. (strain WH7803), this protein is Orotidine 5'-phosphate decarboxylase.